Consider the following 208-residue polypeptide: ATP phosphoribosyltransferase (208 aa).

Belongs to the ATP phosphoribosyltransferase family. Short subfamily. As to quaternary structure, heteromultimer composed of HisG and HisZ subunits.

Its subcellular location is the cytoplasm. It catalyses the reaction 1-(5-phospho-beta-D-ribosyl)-ATP + diphosphate = 5-phospho-alpha-D-ribose 1-diphosphate + ATP. Its pathway is amino-acid biosynthesis; L-histidine biosynthesis; L-histidine from 5-phospho-alpha-D-ribose 1-diphosphate: step 1/9. In terms of biological role, catalyzes the condensation of ATP and 5-phosphoribose 1-diphosphate to form N'-(5'-phosphoribosyl)-ATP (PR-ATP). Has a crucial role in the pathway because the rate of histidine biosynthesis seems to be controlled primarily by regulation of HisG enzymatic activity. In Clostridioides difficile (strain 630) (Peptoclostridium difficile), this protein is ATP phosphoribosyltransferase.